Reading from the N-terminus, the 378-residue chain is Histidinol-phosphate aminotransferase 2 (378 aa).

At lysine 240 the chain carries N6-(pyridoxal phosphate)lysine.

It belongs to the class-II pyridoxal-phosphate-dependent aminotransferase family. Histidinol-phosphate aminotransferase subfamily. As to quaternary structure, homodimer. It depends on pyridoxal 5'-phosphate as a cofactor.

The enzyme catalyses L-histidinol phosphate + 2-oxoglutarate = 3-(imidazol-4-yl)-2-oxopropyl phosphate + L-glutamate. It participates in amino-acid biosynthesis; L-histidine biosynthesis; L-histidine from 5-phospho-alpha-D-ribose 1-diphosphate: step 7/9. In Caulobacter vibrioides (strain ATCC 19089 / CIP 103742 / CB 15) (Caulobacter crescentus), this protein is Histidinol-phosphate aminotransferase 2 (hisC2).